Consider the following 243-residue polypeptide: Venom nerve growth factor 5 (243 aa).

The signal sequence occupies residues 1 to 18 (MSMLCYTLIIAFLIGIWA). Residues 19–125 (APKSEDNVPL…TLNRNIRTKR (107 aa)) constitute a propeptide that is removed on maturation. Basic and acidic residues predominate over residues 47–66 (GLKTSRNTDQRHPAPKKAED). Residues 47-67 (GLKTSRNTDQRHPAPKKAEDQ) form a disordered region. Cystine bridges form between cysteine 139–cysteine 204, cysteine 182–cysteine 232, and cysteine 192–cysteine 234. Asparagine 148 is a glycosylation site (N-linked (GlcNAc...) asparagine).

It belongs to the NGF-beta family. In terms of assembly, homodimer; non-covalently linked. In terms of tissue distribution, expressed by the venom gland.

Its subcellular location is the secreted. Functionally, nerve growth factor is important for the development and maintenance of the sympathetic and sensory nervous systems. It stimulates division and differentiation of sympathetic and embryonic sensory neurons as well as basal forebrain cholinergic neurons in the brain. Its relevance in the snake venom is not clear. However, it has been shown to inhibit metalloproteinase-dependent proteolysis of platelet glycoprotein Ib alpha, suggesting a metalloproteinase inhibition to prevent metalloprotease autodigestion and/or protection against prey proteases. Binds a lipid between the two protein chains in the homodimer. The lipid-bound form promotes histamine relase from mouse mast cells, contrary to the lipid-free form. This chain is Venom nerve growth factor 5, found in Tropidechis carinatus (Australian rough-scaled snake).